Consider the following 2201-residue polypeptide: Voltage-dependent T-type calcium channel subunit alpha-1I (2201 aa).

A disordered region spans residues 1–45 (MADSNLPPSSAAAPAPEPGITEQPGPRSPPPSPPGLEEPLEGTNP). The Cytoplasmic portion of the chain corresponds to 1–76 (MADSNLPPSS…RNWCIKMVCN (76 aa)). A compositionally biased stretch (pro residues) spans 26-36 (PRSPPPSPPGL). One copy of the I repeat lies at 64 to 399 (TSPRNWCIKM…LCLVVIATQF (336 aa)). The helical transmembrane segment at 77–97 (PWFECVSMLVILLNCVTLGMY) threads the bilayer. The Extracellular portion of the chain corresponds to 98–115 (QPCDDMECLSDRCKILQV). A helical transmembrane segment spans residues 116–137 (FDDFIFIFFAMEMVLKMVALGI). Over 138–146 (FGKKCYLGD) the chain is Cytoplasmic. The chain crosses the membrane as a helical span at residues 147–166 (TWNRLDFFIVMAGMVEYSLD). Over 167–171 (LQNIN) the chain is Extracellular. The N-linked (GlcNAc...) asparagine glycan is linked to N171. A helical membrane pass occupies residues 172–189 (LSAIRTVRVLRPLKAINR). Over 190-209 (VPSMRILVNLLLDTLPMLGN) the chain is Cytoplasmic. A helical transmembrane segment spans residues 210-230 (VLLLCFFVFFIFGIIGVQLWA). The Extracellular portion of the chain corresponds to 231–371 (GLLRNRCFLE…YYVMDAHSFY (141 aa)). N242 and N309 each carry an N-linked (GlcNAc...) asparagine glycan. A helical membrane pass occupies residues 372-396 (NFIYFILLIIVGSFFMINLCLVVIA). The Cytoplasmic portion of the chain corresponds to 397-598 (TQFSETKQRE…EKLRGIVDSK (202 aa)). 2 disordered regions span residues 463–500 (QAMGPGTPAPAKPGPHAKEPSHCKLCPRHSPLDPTPHT) and 513–579 (PSSC…AARL). Over residues 545 to 554 (SAEAEANGDG) the composition is skewed to low complexity. The stretch at 584 to 823 (WRETREKLRG…LLVAILVEGF (240 aa)) is one II repeat. A helical membrane pass occupies residues 599–619 (YFNRGIMMAILVNTVSMGIEH). Residues 620 to 632 (HEQPEELTNILEI) are Extracellular-facing. Residues 633 to 654 (CNVVFTSMFALEMILKLAAFGL) traverse the membrane as a helical segment. The Cytoplasmic segment spans residues 655–660 (FDYLRN). Residues 661-679 (PYNIFDSIIVIISIWEIVG) traverse the membrane as a helical segment. Residues 680–687 (QADGGLSV) lie on the Extracellular side of the membrane. The chain crosses the membrane as a helical span at residues 688–711 (LRTFRLLRVLKLVRFMPALRRQLV). Residues 712–722 (VLMKTMDNVAT) are Cytoplasmic-facing. Residues 723–743 (FCMLLMLFIFIFSILGMHIFG) form a helical membrane-spanning segment. The Extracellular portion of the chain corresponds to 744–795 (CKFSLRTDTGDTVPDRKNFDSLLWAIVTVFQILTQEDWNVVLYNGMASTTPW). The chain crosses the membrane as a helical span at residues 796 to 820 (ASLYFVALMTFGNYVLFNLLVAILV). Topologically, residues 821–1125 (EGFQAEGDAN…NKFRILCQTI (305 aa)) are cytoplasmic. The segment at 936–969 (WGRSGTWASRRSSWNSLKHKPPSAEHESLLSGEG) is disordered. The segment covering 941–951 (TWASRRSSWNS) has biased composition (polar residues). Position 1017 is a phosphoserine (S1017). The III repeat unit spans residues 1116–1393 (NKFRILCQTI…MFVGVVVENF (278 aa)). A helical membrane pass occupies residues 1126–1148 (IAHKLFDYVVLAFIFLNCITIAL). Topologically, residues 1149–1166 (ERPQIEAGSTERIFLTVS) are extracellular. Residues 1167-1187 (NYIFTAIFVGEMTLKVVSLGL) form a helical membrane-spanning segment. The Cytoplasmic portion of the chain corresponds to 1188–1197 (YFGEQAYLRS). The helical transmembrane segment at 1198-1217 (SWNVLDGFLVFVSIIDIVVS) threads the bilayer. Residues 1218-1231 (VASAGGAKILGVLR) are Extracellular-facing. Residues 1232–1253 (VLRLLRTLRPLRVISRAPGLKL) form a helical membrane-spanning segment. Residues 1254 to 1263 (VVETLISSLK) lie on the Cytoplasmic side of the membrane. Residues 1264–1287 (PIGNIVLICCAFFIIFGILGVQLF) traverse the membrane as a helical segment. At 1288-1364 (KGKFYHCLGV…DQQPVTNHNP (77 aa)) the chain is on the extracellular side. 2 N-linked (GlcNAc...) asparagine glycosylation sites follow: N1301 and N1304. The chain crosses the membrane as a helical span at residues 1365–1390 (WMLLYFISFLLIVSFFVLNMFVGVVV). Residues 1391–1445 (ENFHKCRQHQEAEEARRREEKRLRRLEKKRRKAQRLPYYATYCPTRLLIHSMCTS) lie on the Cytoplasmic side of the membrane. Residues 1431–1692 (TYCPTRLLIH…VVVAVLMKHL (262 aa)) form an IV repeat. Residues 1446 to 1466 (HYLDIFITFIICLNVVTMSLE) traverse the membrane as a helical segment. Over 1467–1480 (HYNQPTSLETALKY) the chain is Extracellular. The helical transmembrane segment at 1481 to 1502 (CNYMFTTVFVLEAVLKLVAFGL) threads the bilayer. Residues 1503 to 1509 (RRFFKDR) are Cytoplasmic-facing. The chain crosses the membrane as a helical span at residues 1510–1528 (WNQLDLAIVLLSVMGITLE). At 1529-1542 (EIEINAALPINPTI) the chain is on the extracellular side. Residues 1543–1566 (IRIMRVLRIARVLKLLKMATGMRA) traverse the membrane as a helical segment. At 1567–1580 (LLDTVVQALPQVGN) the chain is on the cytoplasmic side. A helical membrane pass occupies residues 1581-1601 (LGLLFMLLFFIYAALGVELFG). Residues 1602 to 1664 (KLVCNDENPC…RSCLSSLQFV (63 aa)) lie on the Extracellular side of the membrane. The chain crosses the membrane as a helical span at residues 1665–1692 (SPLYFVSFVLTAQFVLINVVVAVLMKHL). Over 1693–1835 (DDSNKEAQED…EVQLAETEAF (143 aa)) the chain is Cytoplasmic. Disordered regions lie at residues 1846-1876 (LLGDDLSLEDPTACPPGRKDSKGELDPPEPM), 1916-1938 (LKHDSSQAPPSPFSPDGSSPLLQ), 1992-2045 (SDTS…TRRR), 2057-2105 (RGLR…HSET), and 2126-2201 (LTPA…KRKR). The span at 1992 to 2007 (SDTSLDASPSSSAGSL) shows a compositional bias: low complexity. Polar residues-rich tracts occupy residues 2008 to 2019 (QTTLEDSLTLSD) and 2066 to 2075 (HSSGGSTSPG). Basic and acidic residues predominate over residues 2077-2090 (THHDSMDPSDEEGR).

It belongs to the calcium channel alpha-1 subunit (TC 1.A.1.11) family. CACNA1I subfamily. Interacts with CATSPER1 and CATSPER2, leading to suppress T-type calcium channel activity. In response to raising of intracellular calcium, the T-type channels are activated by CaM-kinase II. As to expression, brain.

Its subcellular location is the membrane. It catalyses the reaction Ca(2+)(in) = Ca(2+)(out). Voltage-sensitive calcium channels (VSCC) mediate the entry of calcium ions into excitable cells and are also involved in a variety of calcium-dependent processes, including muscle contraction, hormone or neurotransmitter release, gene expression, cell motility, cell division and cell death. This channel gives rise to T-type calcium currents. T-type calcium channels belong to the 'low-voltage activated (LVA)' group and are strongly blocked by nickel and mibefradil. A particularity of this type of channels is an opening at quite negative potentials, and a voltage-dependent inactivation. T-type channels serve pacemaking functions in both central neurons and cardiac nodal cells and support calcium signaling in secretory cells and vascular smooth muscle. They may also be involved in the modulation of firing patterns of neurons which is important for information processing as well as in cell growth processes. Gates in voltage ranges similar to, but higher than alpha 1G or alpha 1H. Its function is as follows. Voltage-sensitive calcium channels (VSCC) mediate the entry of calcium ions into excitable cells and are also involved in a variety of calcium-dependent processes, including muscle contraction, hormone or neurotransmitter release, gene expression, cell motility, cell division and cell death. This channel gives rise to T-type calcium currents. The polypeptide is Voltage-dependent T-type calcium channel subunit alpha-1I (Cacna1i) (Rattus norvegicus (Rat)).